The sequence spans 39 residues: Photosystem II reaction center protein J (39 aa).

Residues 9–29 (LWLVVTFGGIVVLTVLGIFIY) form a helical membrane-spanning segment.

The protein belongs to the PsbJ family. PSII is composed of 1 copy each of membrane proteins PsbA, PsbB, PsbC, PsbD, PsbE, PsbF, PsbH, PsbI, PsbJ, PsbK, PsbL, PsbM, PsbT, PsbY, PsbZ, Psb30/Ycf12, at least 3 peripheral proteins of the oxygen-evolving complex and a large number of cofactors. It forms dimeric complexes.

It is found in the plastid. Its subcellular location is the chloroplast thylakoid membrane. Functionally, one of the components of the core complex of photosystem II (PSII). PSII is a light-driven water:plastoquinone oxidoreductase that uses light energy to abstract electrons from H(2)O, generating O(2) and a proton gradient subsequently used for ATP formation. It consists of a core antenna complex that captures photons, and an electron transfer chain that converts photonic excitation into a charge separation. This Cyanidium caldarium (Red alga) protein is Photosystem II reaction center protein J.